The following is a 743-amino-acid chain: Dynein regulatory complex protein 1 homolog (743 aa).

2 stretches are compositionally biased toward acidic residues: residues 1-10 (MDDNEDELEE) and 19-28 (SVEEEEEVEP). The disordered stretch occupies residues 1 to 34 (MDDNEDELEEHQELVSDGSVEEEEEVEPDLGPVD). 2 coiled-coil regions span residues 175–332 (DQIE…VLMN) and 395–416 (KLHS…NNRE). Positions 599–620 (NRLQGAAGGQPDEKEHRSTGDT) are disordered. Residues 715-742 (KMRVQYDAEVVFLRRQNEELRHLLQKFT) are a coiled coil.

Belongs to the DRC1 family.

This chain is Dynein regulatory complex protein 1 homolog, found in Drosophila melanogaster (Fruit fly).